Consider the following 139-residue polypeptide: Hydrogenase maturation factor HypA (139 aa).

Residue His-2 participates in Ni(2+) binding. 4 residues coordinate Zn(2+): Cys-73, Cys-76, Cys-110, and Cys-113.

It belongs to the HypA/HybF family.

Involved in the maturation of [NiFe] hydrogenases. Required for nickel insertion into the metal center of the hydrogenase. This chain is Hydrogenase maturation factor HypA, found in Thermococcus gammatolerans (strain DSM 15229 / JCM 11827 / EJ3).